Here is a 295-residue protein sequence, read N- to C-terminus: Putative nudix hydrolase 7 (295 aa).

Positions 9–182 constitute a Nudix hydrolase domain; it reads SWRSAASIIL…KYALPPPQVY (174 aa). A Nudix box motif is present at residues 52–73; it reads TDAKLGDEFRIAAVRELFEESG. Mg(2+)-binding residues include glutamate 67 and glutamate 71.

Belongs to the Nudix hydrolase family. Mg(2+) is required as a cofactor. Requires Mn(2+) as cofactor.

Its function is as follows. Probably mediates the hydrolysis of some nucleoside diphosphate derivatives. The protein is Putative nudix hydrolase 7 (ndx-7) of Caenorhabditis elegans.